Here is a 248-residue protein sequence, read N- to C-terminus: Probable phosphatase Sfri_3709 (248 aa).

Zn(2+)-binding residues include His-8, His-10, His-16, His-41, Glu-74, His-102, His-132, Asp-193, and His-195.

This sequence belongs to the PHP family. The cofactor is Zn(2+).

The sequence is that of Probable phosphatase Sfri_3709 from Shewanella frigidimarina (strain NCIMB 400).